Consider the following 588-residue polypeptide: Snake venom 5'-nucleotidase (588 aa).

Positions 1 to 40 (MQTPKRRRGAQGCPRSSPSPPLLLLVRAVWFCAALSVAAG) are cleaved as a signal peptide. Zn(2+)-binding residues include aspartate 51 and histidine 53. Cysteine 66 and cysteine 71 are disulfide-bonded. Residues aspartate 99 and asparagine 131 each contribute to the Zn(2+) site. A glycan (N-linked (GlcNAc...) asparagine) is linked at asparagine 167. Histidine 234 and histidine 257 together coordinate Zn(2+). N-linked (GlcNAc...) asparagine glycans are attached at residues asparagine 347 and asparagine 361. 2 cysteine pairs are disulfide-bonded: cysteine 367–cysteine 372 and cysteine 379–cysteine 401. Arginine 368 is a binding site for AMP. The AMP site is built by asparagine 404 and arginine 409. A glycan (N-linked (GlcNAc...) asparagine) is linked at asparagine 418. Phenylalanine 432 contacts AMP. A disulfide bond links cysteine 491 and cysteine 494. The AMP site is built by phenylalanine 515 and aspartate 521. A glycan (N-linked (GlcNAc...) asparagine) is linked at asparagine 532. Serine 564 carries GPI-anchor amidated serine lipidation. The propeptide at 565–588 (AGTLFQAQLFLTWGLCVSLLYFIL) is removed in mature form.

The protein belongs to the 5'-nucleotidase family. It depends on Zn(2+) as a cofactor. In terms of processing, venom 5'-nucleotidases (or a part thereof) may be released into the venom via exosome-like vesicles. They may be attached via a GPI anchor to the membrane of these vesicles. Soluble forms of 5'-nucleotidase might be released by cleavage of the ectodomain in the exosome-like vesicles or venom gland cells. Expressed by the venom gland.

It is found in the membrane. The enzyme catalyses a ribonucleoside 5'-phosphate + H2O = a ribonucleoside + phosphate. Functionally, hydrolyzes nucleotides into nucleosides. Snake venom 5'-nucleotidases are widely distributed among venomous snake taxa, but there is a lack of information about their biological activities. They have been shown to inhibit platelet aggregation. This effect may be due to the liberation of inhibitory AMP or adenosine by its action on ADP released upon initiation of aggregation. Venom 5'-nucleotidases are also known to synergistically act in vivo with other toxins like ADPases, phospholipases, and disintegrins to exert a more pronounced anti-coagulant effect. The polypeptide is Snake venom 5'-nucleotidase (Crotalus adamanteus (Eastern diamondback rattlesnake)).